The chain runs to 139 residues: MGQNWKRQQKLWNVPQLPFIRVPPSIYDTSLLKALNQGQQRYFYSIMRIYNSRPQWEALQTRYIHSLQHQQLLGYITQREALSYALVLRDSTKRASAKVAPQRTIPRKTSAMTRRCPSVLPVSVVLPRAQSKRRQVLRN.

This sequence belongs to the FAM216 family.

This Homo sapiens (Human) protein is Protein FAM216B (FAM216B).